Reading from the N-terminus, the 82-residue chain is Small ribosomal subunit protein uS17 (82 aa).

It belongs to the universal ribosomal protein uS17 family. Part of the 30S ribosomal subunit.

Its function is as follows. One of the primary rRNA binding proteins, it binds specifically to the 5'-end of 16S ribosomal RNA. This is Small ribosomal subunit protein uS17 from Synechococcus elongatus (strain ATCC 33912 / PCC 7942 / FACHB-805) (Anacystis nidulans R2).